The primary structure comprises 289 residues: Protoheme IX farnesyltransferase (289 aa).

Transmembrane regions (helical) follow at residues 18–38 (VTSLVLATIIPGLYLASEQSP), 40–60 (GFLIAITLFGTFLMSSASFIF), 87–107 (VVQATLVGIAMMGSSFYVLAV), 111–131 (LLTALCAFAALISYVFLYTIF), 139–159 (NIVIGGVAGCVGPLIGYAAIG), 168–188 (SLFMMIFLWTPAHFWALAIFL), 212–232 (SIFFYTILYSIACVSFYFLES), 234–254 (MGFLYLIVSLIVCIWMGILSY), and 269–289 (FFFSILHLFIINITIVVDHLI).

This sequence belongs to the UbiA prenyltransferase family. Protoheme IX farnesyltransferase subfamily.

It localises to the cell inner membrane. It carries out the reaction heme b + (2E,6E)-farnesyl diphosphate + H2O = Fe(II)-heme o + diphosphate. It functions in the pathway porphyrin-containing compound metabolism; heme O biosynthesis; heme O from protoheme: step 1/1. Functionally, converts heme B (protoheme IX) to heme O by substitution of the vinyl group on carbon 2 of heme B porphyrin ring with a hydroxyethyl farnesyl side group. The sequence is that of Protoheme IX farnesyltransferase from Leptospira interrogans serogroup Icterohaemorrhagiae serovar copenhageni (strain Fiocruz L1-130).